The primary structure comprises 429 residues: Cytochrome bc1 complex Rieske iron-sulfur subunit (429 aa).

The segment at 1 to 45 is disordered; it reads MSRADDDAVGVPPTCGGRSDEEERRIVPGPNPQDGAKDGAKATAV. Transmembrane regions (helical) follow at residues 96-116, 137-157, and 207-227; these read VAVW…IFLF, PLYG…AVLY, and FGVG…GGLI. The 95-residue stretch at 316–410 folds into the Rieske domain; it reads RNPVMLIRIK…ITIDTDGYLV (95 aa). [2Fe-2S] cluster is bound by residues cysteine 353, histidine 355, cysteine 372, and histidine 375. A disulfide bridge connects residues cysteine 358 and cysteine 374.

This sequence belongs to the Rieske iron-sulfur protein family. In terms of assembly, the cytochrome bc1 complex is composed of a cytochrome b (QcrB), the Rieske iron-sulfur protein (QcrA) and a diheme cytochrome c (QcrC) subunit. [2Fe-2S] cluster serves as cofactor.

The protein resides in the cell membrane. Functionally, iron-sulfur subunit of the cytochrome bc1 complex, an essential component of the respiratory electron transport chain required for ATP synthesis. The bc1 complex catalyzes the oxidation of menaquinol and the reduction of cytochrome c in the respiratory chain. The bc1 complex operates through a Q-cycle mechanism that couples electron transfer to generation of the proton gradient that drives ATP synthesis. The chain is Cytochrome bc1 complex Rieske iron-sulfur subunit (qcrA) from Mycobacterium bovis (strain ATCC BAA-935 / AF2122/97).